The following is a 210-amino-acid chain: Proteasome subunit beta (210 aa).

Residues 1–9 constitute a propeptide, removed in mature form; by autocatalysis; that stretch reads MDNDKYLKG. Thr-10 (nucleophile) is an active-site residue.

Belongs to the peptidase T1B family. As to quaternary structure, the 20S proteasome core is composed of 14 alpha and 14 beta subunits that assemble into four stacked heptameric rings, resulting in a barrel-shaped structure. The two inner rings, each composed of seven catalytic beta subunits, are sandwiched by two outer rings, each composed of seven alpha subunits. The catalytic chamber with the active sites is on the inside of the barrel. Has a gated structure, the ends of the cylinder being occluded by the N-termini of the alpha-subunits. Is capped at one or both ends by the proteasome regulatory ATPase, PAN.

It is found in the cytoplasm. It catalyses the reaction Cleavage of peptide bonds with very broad specificity.. Its activity is regulated as follows. The formation of the proteasomal ATPase PAN-20S proteasome complex, via the docking of the C-termini of PAN into the intersubunit pockets in the alpha-rings, triggers opening of the gate for substrate entry. Interconversion between the open-gate and close-gate conformations leads to a dynamic regulation of the 20S proteasome proteolysis activity. In terms of biological role, component of the proteasome core, a large protease complex with broad specificity involved in protein degradation. This is Proteasome subunit beta from Methanosarcina thermophila.